We begin with the raw amino-acid sequence, 440 residues long: Protein translocase subunit SecY (440 aa).

The next 10 helical transmembrane spans lie at 17-37, 74-94, 116-135, 155-175, 178-198, 213-233, 270-290, 316-336, 374-394, and 403-423; these read IFFT…PSPG, IFAI…LLTV, YTRY…IVAL, FFDL…VMWM, LITE…GIAT, GVVF…VVFV, VIPV…TQIV, WQYI…YVSV, LLFV…IMLD, and GATP…LTTV.

Belongs to the SecY/SEC61-alpha family. In terms of assembly, component of the Sec protein translocase complex. Heterotrimer consisting of SecY, SecE and SecG subunits. The heterotrimers can form oligomers, although 1 heterotrimer is thought to be able to translocate proteins. Interacts with the ribosome. Interacts with SecDF, and other proteins may be involved. Interacts with SecA.

The protein resides in the cell membrane. Functionally, the central subunit of the protein translocation channel SecYEG. Consists of two halves formed by TMs 1-5 and 6-10. These two domains form a lateral gate at the front which open onto the bilayer between TMs 2 and 7, and are clamped together by SecE at the back. The channel is closed by both a pore ring composed of hydrophobic SecY resides and a short helix (helix 2A) on the extracellular side of the membrane which forms a plug. The plug probably moves laterally to allow the channel to open. The ring and the pore may move independently. The sequence is that of Protein translocase subunit SecY from Corynebacterium glutamicum (strain ATCC 13032 / DSM 20300 / JCM 1318 / BCRC 11384 / CCUG 27702 / LMG 3730 / NBRC 12168 / NCIMB 10025 / NRRL B-2784 / 534).